The sequence spans 226 residues: MMPMNQEFIQKLRFNEKGLIPAIAQDWLDGAILMMAWMNKESLEKTLITGEVHYWSRSREKLWHKGETSGHFQILKGIRFDCDSDVMLLSIEQVGSIACHTGARSCFFQEVEENIPDLEQNSTFNRPLSNTCSELFEVIKDRSSNPQKNSYTNSLLKDGDNKILKKIGEEGSEFVMACKDNDHESISNEAADLIFHIQVALKYHKVEWRDVLEVLAKRRQSKSNPK.

Residues 1 to 131 (MMPMNQEFIQ…STFNRPLSNT (131 aa)) are phosphoribosyl-AMP cyclohydrolase. A phosphoribosyl-ATP pyrophosphohydrolase region spans residues 132–226 (CSELFEVIKD…KRRQSKSNPK (95 aa)).

It in the N-terminal section; belongs to the PRA-CH family. This sequence in the C-terminal section; belongs to the PRA-PH family.

It is found in the cytoplasm. The enzyme catalyses 1-(5-phospho-beta-D-ribosyl)-ATP + H2O = 1-(5-phospho-beta-D-ribosyl)-5'-AMP + diphosphate + H(+). The catalysed reaction is 1-(5-phospho-beta-D-ribosyl)-5'-AMP + H2O = 1-(5-phospho-beta-D-ribosyl)-5-[(5-phospho-beta-D-ribosylamino)methylideneamino]imidazole-4-carboxamide. It functions in the pathway amino-acid biosynthesis; L-histidine biosynthesis; L-histidine from 5-phospho-alpha-D-ribose 1-diphosphate: step 2/9. It participates in amino-acid biosynthesis; L-histidine biosynthesis; L-histidine from 5-phospho-alpha-D-ribose 1-diphosphate: step 3/9. This is Histidine biosynthesis bifunctional protein HisIE from Prochlorococcus marinus (strain SARG / CCMP1375 / SS120).